The chain runs to 472 residues: Ribulose bisphosphate carboxylase large chain (472 aa).

Residues Asn115 and Thr165 each coordinate substrate. Lys167 (proton acceptor) is an active-site residue. Residue Lys169 coordinates substrate. The Mg(2+) site is built by Lys193, Asp195, and Glu196. Lys193 bears the N6-carboxylysine mark. His286 (proton acceptor) is an active-site residue. Substrate contacts are provided by Arg287, His319, and Ser371.

Belongs to the RuBisCO large chain family. Type I subfamily. In terms of assembly, heterohexadecamer of 8 large chains and 8 small chains. Mg(2+) is required as a cofactor.

It catalyses the reaction 2 (2R)-3-phosphoglycerate + 2 H(+) = D-ribulose 1,5-bisphosphate + CO2 + H2O. It carries out the reaction D-ribulose 1,5-bisphosphate + O2 = 2-phosphoglycolate + (2R)-3-phosphoglycerate + 2 H(+). RuBisCO catalyzes two reactions: the carboxylation of D-ribulose 1,5-bisphosphate, the primary event in carbon dioxide fixation, as well as the oxidative fragmentation of the pentose substrate. Both reactions occur simultaneously and in competition at the same active site. The sequence is that of Ribulose bisphosphate carboxylase large chain from Solemya velum gill symbiont.